We begin with the raw amino-acid sequence, 383 residues long: Geranylgeranyl pyrophosphate synthase esdpD (383 aa).

Isopentenyl diphosphate contacts are provided by Lys-88, Arg-91, and His-120. The Mg(2+) site is built by Asp-150 and Asp-154. Position 159 (Arg-159) interacts with dimethylallyl diphosphate. Arg-160 serves as a coordination point for isopentenyl diphosphate. Dimethylallyl diphosphate contacts are provided by Lys-237, Thr-238, and Gln-271. Asp-274 is a binding site for Mg(2+). Residues Asn-278, Lys-288, and Lys-298 each contribute to the dimethylallyl diphosphate site.

Belongs to the FPP/GGPP synthase family. The cofactor is Mg(2+).

It carries out the reaction isopentenyl diphosphate + dimethylallyl diphosphate = (2E)-geranyl diphosphate + diphosphate. It catalyses the reaction isopentenyl diphosphate + (2E)-geranyl diphosphate = (2E,6E)-farnesyl diphosphate + diphosphate. The catalysed reaction is isopentenyl diphosphate + (2E,6E)-farnesyl diphosphate = (2E,6E,10E)-geranylgeranyl diphosphate + diphosphate. It participates in secondary metabolite biosynthesis; terpenoid biosynthesis. Functionally, geranylgeranyl pyrophosphate synthase; part of the cluster that mediates the biosynthesis of shearones, diterpenoid pyrones (DPs) which are structurally diverse meroterpenoids consisting of a diterpene linked by a pyrone, and which may exhibit a range of bioactivities. Within the pathway, esdpD takes part to the biosynthesis of the molecular scaffold by providing geranylgeranyl pyrophosphate (GGPP) to the prenyltransferase esdpC for C-3 geranylgeranylation of the alpha-pyrone. The molecular scaffold is commonly biosynthesized by a series of enzymes including the non-reducing polyketide synthase (NR-PKS) esdpA that generates an alpha-pyrone; the prenyltransferase esdpC that attaches a geranylgeranyl pyrophosphate (GGPP) produced by the GGPP synthase (GGPPS) esdpD onto the pyrone unit; the FAD-dependent monooxygenase esdpE that converts an olefin on the diterpene unit into an epoxide; and the terpene cyclase esdpB that catalyzes the cyclization reactions to give the molecular backbone shearone A. In the modification steps, esdpF oxidizes the hydroxy group to a ketone at C-3 and esdpG then attaches hydroxy groups at both C-11 and C-12. After that, esdpI hydroxylates at C-20 and esdpH hydroxylates at C-6'. The ether bridge is generated by nucleophilic attack of the hydroxy group at C-20 to the carbonyl carbon at C-3. EsdpH can also functions prior to esdpI. The different combinations of these modification enzymes lead to the production of diverse shearone derivatives, shearone I being the end product of the pathway. The alpha-ketoglutarate-dependent dioxygenase esdpJ seems not to be involved in this pathway. In Penicillium shearii (Eupenicillium shearii), this protein is Geranylgeranyl pyrophosphate synthase esdpD.